Reading from the N-terminus, the 252-residue chain is Imidazole glycerol phosphate synthase subunit HisF (252 aa).

Catalysis depends on residues Asp11 and Asp130.

This sequence belongs to the HisA/HisF family. As to quaternary structure, heterodimer of HisH and HisF.

It localises to the cytoplasm. It carries out the reaction 5-[(5-phospho-1-deoxy-D-ribulos-1-ylimino)methylamino]-1-(5-phospho-beta-D-ribosyl)imidazole-4-carboxamide + L-glutamine = D-erythro-1-(imidazol-4-yl)glycerol 3-phosphate + 5-amino-1-(5-phospho-beta-D-ribosyl)imidazole-4-carboxamide + L-glutamate + H(+). It participates in amino-acid biosynthesis; L-histidine biosynthesis; L-histidine from 5-phospho-alpha-D-ribose 1-diphosphate: step 5/9. Functionally, IGPS catalyzes the conversion of PRFAR and glutamine to IGP, AICAR and glutamate. The HisF subunit catalyzes the cyclization activity that produces IGP and AICAR from PRFAR using the ammonia provided by the HisH subunit. This is Imidazole glycerol phosphate synthase subunit HisF from Pelotomaculum thermopropionicum (strain DSM 13744 / JCM 10971 / SI).